A 62-amino-acid polypeptide reads, in one-letter code: Large ribosomal subunit protein bL32 (62 aa).

Residues 1–16 (MAVPKRKTSPSRRGMR) show a composition bias toward basic residues. Positions 1–62 (MAVPKRKTSP…QILKPKTAEV (62 aa)) are disordered. The segment covering 28-44 (VEDKDSGELRRPHHLDL) has biased composition (basic and acidic residues).

The protein belongs to the bacterial ribosomal protein bL32 family.

The polypeptide is Large ribosomal subunit protein bL32 (Azorhizobium caulinodans (strain ATCC 43989 / DSM 5975 / JCM 20966 / LMG 6465 / NBRC 14845 / NCIMB 13405 / ORS 571)).